Consider the following 300-residue polypeptide: Fatty acid hydroxylase uhd1 (300 aa).

NADP(+) contacts are provided by residues 14-20 (GANGFVG), R39, 63-64 (DL), 83-85 (VAS), Y156, K160, 183-186 (PVYI), and S199. The active-site Proton donor is the K160.

This sequence belongs to the NAD(P)-dependent epimerase/dehydratase family. Dihydroflavonol-4-reductase subfamily.

The protein operates within secondary metabolite biosynthesis. Its function is as follows. Fatty acid hydroxylase; part of the gene cluster that mediates the biosynthesis of the glycolipid biosurfactant ustilagic acid (UA). UA is a secreted cellobiose glycolipid that is toxic for many microorganisms and confers biocontrol activity to U.maydis. UA consists of 15,16-dihydroxypalmitic or 2,15,16-trihydroxypalmitic acid, which is O-glycosidically linked to cellobiose at its terminal hydroxyl group. In addition, the cellobiose moiety is acetylated and acylated with a short-chain hydroxy fatty acid. UA biosynthesis starts with omega-hydroxylation of palmitic acid catalyzed by the cytochrome P450 monooxygenase cyp1. Terminal hydroxylation of palmitic acid precedes subterminal hydroxylation catalyzed by the cytochrome P450 monooxygenase cyp2. Sequential glucosylation of the hydroxy fatty acid is probably catalyzed by the glycosyltransferase ugt1. The cellobiose lipid is further decorated by acetylation of the proximal glucose residue and by acylation with a short-chain beta-hydroxy fatty acid at the distal glucose residue. The acyltransferase uat1 may be a good candidate for catalyzing either acetylation or acylation of the cellobiose lipid. The fatty acid synthase fas2 may be involved in synthesis of the carbon backbone of the short-chain beta-hydroxy fatty acid esterified to the cellobiose disaccharide. The secreted UA consists of a mixture of both alpha-hydroxylated and non-hydroxylated glycolipids; therefore, alpha-hydroxylation of the long-chain fatty, catalyzed by the fatty acid hydroxylase ahd1, occurs late in UA biosynthesis and may be the last step before secretion. This is Fatty acid hydroxylase uhd1 from Mycosarcoma maydis (Corn smut fungus).